The following is a 270-amino-acid chain: Tryptophan synthase alpha chain (270 aa).

Residues glutamate 49 and aspartate 60 each act as proton acceptor in the active site.

It belongs to the TrpA family. Tetramer of two alpha and two beta chains.

The catalysed reaction is (1S,2R)-1-C-(indol-3-yl)glycerol 3-phosphate + L-serine = D-glyceraldehyde 3-phosphate + L-tryptophan + H2O. The protein operates within amino-acid biosynthesis; L-tryptophan biosynthesis; L-tryptophan from chorismate: step 5/5. Functionally, the alpha subunit is responsible for the aldol cleavage of indoleglycerol phosphate to indole and glyceraldehyde 3-phosphate. This chain is Tryptophan synthase alpha chain, found in Thermobifida fusca (strain YX).